A 267-amino-acid chain; its full sequence is UPF0328 protein ECU06_0070 (267 aa).

It belongs to the UPF0328 family.

This chain is UPF0328 protein ECU06_0070, found in Encephalitozoon cuniculi (strain GB-M1) (Microsporidian parasite).